The following is a 209-amino-acid chain: 3-demethoxyubiquinol 3-hydroxylase (209 aa).

The span at 23–36 shows a compositional bias: low complexity; sequence PHATRAAPAPAQAP. Residues 23–42 are disordered; that stretch reads PHATRAAPAPAQAPGEMTDS. Positions 58, 88, 91, 140, 172, and 175 each coordinate Fe cation.

It belongs to the COQ7 family. Fe cation is required as a cofactor.

The protein localises to the cell membrane. It carries out the reaction a 5-methoxy-2-methyl-3-(all-trans-polyprenyl)benzene-1,4-diol + AH2 + O2 = a 3-demethylubiquinol + A + H2O. It functions in the pathway cofactor biosynthesis; ubiquinone biosynthesis. Its function is as follows. Catalyzes the hydroxylation of 2-nonaprenyl-3-methyl-6-methoxy-1,4-benzoquinol during ubiquinone biosynthesis. In Variovorax paradoxus (strain S110), this protein is 3-demethoxyubiquinol 3-hydroxylase.